Here is a 300-residue protein sequence, read N- to C-terminus: 4-hydroxy-tetrahydrodipicolinate synthase (300 aa).

Thr-45 serves as a coordination point for pyruvate. Residue Tyr-140 is the Proton donor/acceptor of the active site. Lys-169 (schiff-base intermediate with substrate) is an active-site residue. Ile-210 lines the pyruvate pocket.

This sequence belongs to the DapA family. In terms of assembly, homotetramer; dimer of dimers.

The protein localises to the cytoplasm. It carries out the reaction L-aspartate 4-semialdehyde + pyruvate = (2S,4S)-4-hydroxy-2,3,4,5-tetrahydrodipicolinate + H2O + H(+). Its pathway is amino-acid biosynthesis; L-lysine biosynthesis via DAP pathway; (S)-tetrahydrodipicolinate from L-aspartate: step 3/4. Its function is as follows. Catalyzes the condensation of (S)-aspartate-beta-semialdehyde [(S)-ASA] and pyruvate to 4-hydroxy-tetrahydrodipicolinate (HTPA). The chain is 4-hydroxy-tetrahydrodipicolinate synthase from Helicobacter pylori (strain Shi470).